The sequence spans 332 residues: MLFLHFLFLDVVLGGSITENVVQENISFYVMQISSYANKSWVQNHGSGWLDELQTHGWDSESDKIIFLHTWSRGNFSNEELEDLQLLFHAYFSGLALRIQHQPSQLEVKYPFEVQARAGCELHSGEHTKGFIHAAVNGLNFLSYQNKSLVPSPEGGTRAQKFCDLFNTYEGIRETVYYLIRDTCPRFLLGLLDAGKMDLQRQVRPEVWLSSSPNLEPGRLLLACHVSGFYPKPIWVMWMRGAQEQLETKQGDILPHADGTWYLRVTLDVAAREAAGLSCRVRHSSLRDQDIILYWGHGLSVILITFAVIVPLVLLIVLMLLYKKRCTYQGIQ.

A signal peptide spans 1–17 (MLFLHFLFLDVVLGGSI). Over 18-300 (TENVVQENIS…IILYWGHGLS (283 aa)) the chain is Extracellular. 4 N-linked (GlcNAc...) asparagine glycosylation sites follow: Asn25, Asn38, Asn75, and Asn146. 2 cysteine pairs are disulfide-bonded: Cys120–Cys184 and Cys224–Cys279. Residues 205-292 (PEVWLSSSPN…HSSLRDQDII (88 aa)) enclose the Ig-like domain. The helical transmembrane segment at 301-321 (VILITFAVIVPLVLLIVLMLL) threads the bilayer. Residues 322–332 (YKKRCTYQGIQ) lie on the Cytoplasmic side of the membrane.

Heterodimer with B2M (beta-2-microglobulin).

Its subcellular location is the cell membrane. The protein localises to the endosome membrane. Functionally, antigen-presenting protein that binds self and non-self lipid and glycolipid antigens and presents them to T-cell receptors on natural killer T-cells. The sequence is that of T-cell surface glycoprotein CD1c1 (CD1C1) from Cavia porcellus (Guinea pig).